Here is a 24-residue protein sequence, read N- to C-terminus: Humanin-like 12 (24 aa).

Belongs to the humanin family.

The protein localises to the secreted. It localises to the cytoplasm. Functionally, plays a role as a neuroprotective and antiapoptotic factor. This Homo sapiens (Human) protein is Humanin-like 12.